Consider the following 215-residue polypeptide: Transcription elongation factor A protein-like 4 (215 aa).

Met1 is modified (N-acetylmethionine). Residues 1–133 (MEKLYSENEG…RKAKRKTNKG (133 aa)) form a disordered region. Residues Ser6, Ser88, and Ser102 each carry the phosphoserine modification. The span at 25–102 (QDERKPEVTC…KPEIEGKPES (78 aa)) shows a compositional bias: basic and acidic residues.

Belongs to the TFS-II family. TFA subfamily.

The protein localises to the nucleus. In terms of biological role, may be involved in transcriptional regulation. This chain is Transcription elongation factor A protein-like 4 (TCEAL4), found in Homo sapiens (Human).